The following is a 203-amino-acid chain: Pyridoxal 5'-phosphate synthase subunit PdxT (203 aa).

54–56 (GES) is a binding site for L-glutamine. Residue Cys-86 is the Nucleophile of the active site. L-glutamine contacts are provided by residues Arg-113 and 141–142 (IR). Active-site charge relay system residues include His-177 and Glu-179.

This sequence belongs to the glutaminase PdxT/SNO family. In terms of assembly, in the presence of PdxS, forms a dodecamer of heterodimers. Only shows activity in the heterodimer.

The catalysed reaction is aldehydo-D-ribose 5-phosphate + D-glyceraldehyde 3-phosphate + L-glutamine = pyridoxal 5'-phosphate + L-glutamate + phosphate + 3 H2O + H(+). It catalyses the reaction L-glutamine + H2O = L-glutamate + NH4(+). The protein operates within cofactor biosynthesis; pyridoxal 5'-phosphate biosynthesis. Catalyzes the hydrolysis of glutamine to glutamate and ammonia as part of the biosynthesis of pyridoxal 5'-phosphate. The resulting ammonia molecule is channeled to the active site of PdxS. The sequence is that of Pyridoxal 5'-phosphate synthase subunit PdxT from Halobacterium salinarum (strain ATCC 29341 / DSM 671 / R1).